A 598-amino-acid polypeptide reads, in one-letter code: ATP-dependent lipid A-core flippase (598 aa).

Over residues 1–15 the composition is skewed to polar residues; the sequence is MSQAYQPDSTKTSAK. Residues 1–21 are disordered; the sequence is MSQAYQPDSTKTSAKTPVAPT. Transmembrane regions (helical) follow at residues 44-64, 85-105, 172-192, and 269-289; these read WWAI…EIWI, LFPF…FLGN, VVAL…ILFV, and INTP…VWLA. The 282-residue stretch at 48–329 folds into the ABC transmembrane type-1 domain; that stretch reads LLTIIGFAIN…LTDVNQQLQR (282 aa). The region spanning 360 to 595 is the ABC transporter domain; sequence IKLDNVSLVY…HGHYAQMYAR (236 aa). An ATP-binding site is contributed by 393–400; sequence GRSGAGKS.

The protein belongs to the ABC transporter superfamily. Lipid exporter (TC 3.A.1.106) family. In terms of assembly, homodimer.

It localises to the cell inner membrane. It carries out the reaction ATP + H2O + lipid A-core oligosaccharideSide 1 = ADP + phosphate + lipid A-core oligosaccharideSide 2.. Involved in lipopolysaccharide (LPS) biosynthesis. Translocates lipid A-core from the inner to the outer leaflet of the inner membrane. Transmembrane domains (TMD) form a pore in the inner membrane and the ATP-binding domain (NBD) is responsible for energy generation. The sequence is that of ATP-dependent lipid A-core flippase from Psychrobacter cryohalolentis (strain ATCC BAA-1226 / DSM 17306 / VKM B-2378 / K5).